Here is a 290-residue protein sequence, read N- to C-terminus: Ribosomal RNA small subunit methyltransferase A (290 aa).

Residues Asn27, Leu29, Gly54, Glu75, Asp100, and Asn125 each contribute to the S-adenosyl-L-methionine site.

It belongs to the class I-like SAM-binding methyltransferase superfamily. rRNA adenine N(6)-methyltransferase family. RsmA subfamily.

It is found in the cytoplasm. It carries out the reaction adenosine(1518)/adenosine(1519) in 16S rRNA + 4 S-adenosyl-L-methionine = N(6)-dimethyladenosine(1518)/N(6)-dimethyladenosine(1519) in 16S rRNA + 4 S-adenosyl-L-homocysteine + 4 H(+). Its function is as follows. Specifically dimethylates two adjacent adenosines (A1518 and A1519) in the loop of a conserved hairpin near the 3'-end of 16S rRNA in the 30S particle. May play a critical role in biogenesis of 30S subunits. The polypeptide is Ribosomal RNA small subunit methyltransferase A (Streptococcus thermophilus (strain ATCC BAA-491 / LMD-9)).